A 200-amino-acid polypeptide reads, in one-letter code: NAD(P)H dehydrogenase (quinone) (200 aa).

In terms of domain architecture, Flavodoxin-like spans 4-191 (VLVLYYSSYG…DIARYQGKHV (188 aa)). Residues 10–15 (SSYGHV) and 79–81 (TRF) each bind FMN. Y12 contacts NAD(+). A substrate-binding site is contributed by W99. FMN is bound by residues 114-120 (STGTQHG) and H135.

Belongs to the WrbA family. The cofactor is FMN.

It carries out the reaction a quinone + NADH + H(+) = a quinol + NAD(+). It catalyses the reaction a quinone + NADPH + H(+) = a quinol + NADP(+). This chain is NAD(P)H dehydrogenase (quinone), found in Burkholderia cenocepacia (strain HI2424).